A 224-amino-acid polypeptide reads, in one-letter code: Phosphoribosylformylglycinamidine synthase subunit PurQ (224 aa).

The 223-residue stretch at 2–224 (KVTILQFPGT…IKMLQGFLRA (223 aa)) folds into the Glutamine amidotransferase type-1 domain. C86 (nucleophile) is an active-site residue. Residues H200 and E202 contribute to the active site.

Part of the FGAM synthase complex composed of 1 PurL, 1 PurQ and 2 PurS subunits.

Its subcellular location is the cytoplasm. It carries out the reaction N(2)-formyl-N(1)-(5-phospho-beta-D-ribosyl)glycinamide + L-glutamine + ATP + H2O = 2-formamido-N(1)-(5-O-phospho-beta-D-ribosyl)acetamidine + L-glutamate + ADP + phosphate + H(+). The catalysed reaction is L-glutamine + H2O = L-glutamate + NH4(+). Its pathway is purine metabolism; IMP biosynthesis via de novo pathway; 5-amino-1-(5-phospho-D-ribosyl)imidazole from N(2)-formyl-N(1)-(5-phospho-D-ribosyl)glycinamide: step 1/2. Functionally, part of the phosphoribosylformylglycinamidine synthase complex involved in the purines biosynthetic pathway. Catalyzes the ATP-dependent conversion of formylglycinamide ribonucleotide (FGAR) and glutamine to yield formylglycinamidine ribonucleotide (FGAM) and glutamate. The FGAM synthase complex is composed of three subunits. PurQ produces an ammonia molecule by converting glutamine to glutamate. PurL transfers the ammonia molecule to FGAR to form FGAM in an ATP-dependent manner. PurS interacts with PurQ and PurL and is thought to assist in the transfer of the ammonia molecule from PurQ to PurL. The chain is Phosphoribosylformylglycinamidine synthase subunit PurQ from Sulfurimonas denitrificans (strain ATCC 33889 / DSM 1251) (Thiomicrospira denitrificans (strain ATCC 33889 / DSM 1251)).